The primary structure comprises 178 residues: Ribosome maturation factor RimP (178 aa).

This sequence belongs to the RimP family.

It is found in the cytoplasm. Its function is as follows. Required for maturation of 30S ribosomal subunits. The chain is Ribosome maturation factor RimP from Streptococcus pyogenes serotype M4 (strain MGAS10750).